The primary structure comprises 441 residues: Probable magnesium transporter NIPA8 (441 aa).

At M1–W4 the chain is on the extracellular side. Residues V5 to L25 form a helical membrane-spanning segment. The Cytoplasmic portion of the chain corresponds to K26–R56. The helical transmembrane segment at V57–A77 threads the bilayer. The Extracellular segment spans residues Q78 to S79. Residues L80–L100 form a helical membrane-spanning segment. Over N101–T105 the chain is Cytoplasmic. Residues V106 to G126 traverse the membrane as a helical segment. Residues N127–N144 are Extracellular-facing. Residues V145–Y165 form a helical membrane-spanning segment. The Cytoplasmic portion of the chain corresponds to R166 to K184. Residues M185–F205 form a helical membrane-spanning segment. The Extracellular segment spans residues A206–Q222. Residues L223–M243 form a helical membrane-spanning segment. At T244–A255 the chain is on the cytoplasmic side. The chain crosses the membrane as a helical span at residues I256–I276. Residues Y277–R288 lie on the Extracellular side of the membrane. Residues T289–D309 traverse the membrane as a helical segment. Residues D310 to A441 are Cytoplasmic-facing. The tract at residues G313 to H347 is disordered. Low complexity predominate over residues S320–S330. Basic and acidic residues predominate over residues E334–H347.

This sequence belongs to the NIPA (TC 2.A.7) family. As to quaternary structure, homodimer.

The protein resides in the cell membrane. The protein localises to the early endosome. Functionally, acts as a Mg(2+) transporter. Can also transport other divalent cations such as Fe(2+), Sr(2+), Ba(2+), Mn(2+) and Co(2+) but to a much less extent than Mg(2+). This is Probable magnesium transporter NIPA8 from Arabidopsis thaliana (Mouse-ear cress).